Reading from the N-terminus, the 428-residue chain is Putative G-protein coupled receptor F59B2.13 (428 aa).

Residues 1-30 (MSNNTTIPSKTATDICLTDRQMSLSVSSTE) lie on the Extracellular side of the membrane. N-linked (GlcNAc...) asparagine glycosylation is found at N3 and N4. Residues 31–51 (GVLIGTIIPILVLFGISGNIL) form a helical membrane-spanning segment. At 52–67 (NLTVLLAPNLRTRSNQ) the chain is on the cytoplasmic side. A helical membrane pass occupies residues 68–88 (LLACLAVADIVSLVVILPHSM). Topologically, residues 89-110 (AHYETFETALWFRKFYGKYKFQ) are extracellular. Residues 111 to 131 (IIAMTNWSIATATWLVFVICL) traverse the membrane as a helical segment. The Cytoplasmic portion of the chain corresponds to 132-154 (ERLIIIKYPLSVRKQAKFFTPRN). A helical transmembrane segment spans residues 155–175 (VVTIIVVTTFILTSYNHVSHA). Over 176–222 (CAEKLFCNGTQYHVACLGIDSERWFRNEPNPNSEFMKSVVRVAPQVN) the chain is Extracellular. N183 is a glycosylation site (N-linked (GlcNAc...) asparagine). Residues 223–243 (AIFVVLIPVVLVIIFNVMLIL) form a helical membrane-spanning segment. Residues 244 to 278 (TLRQRTKLFEPSKTIRGDSQFTQLQSKTEHKVTIT) lie on the Cytoplasmic side of the membrane. The helical transmembrane segment at 279–299 (VTAIVTCFTITQSPSAFVTFL) threads the bilayer. Topologically, residues 300 to 309 (SSYVHRDWVT) are extracellular. Residues 310 to 330 (LSAICTILVVLGKALNFVLFC) form a helical membrane-spanning segment. The Cytoplasmic segment spans residues 331-428 (LSSASFRQRL…KEFRRGTSFV (98 aa)).

Belongs to the G-protein coupled receptor 1 family.

It localises to the cell membrane. This Caenorhabditis elegans protein is Putative G-protein coupled receptor F59B2.13.